The primary structure comprises 407 residues: S-adenosylmethionine synthase (407 aa).

Residue His21 participates in ATP binding. Asp23 is a Mg(2+) binding site. Glu49 serves as a coordination point for K(+). Glu62 and Gln105 together coordinate L-methionine. The segment at 105 to 115 (QSQEIGAGVDA) is flexible loop. Residues 179–181 (DGK), Asp259, 265–266 (RK), Ala282, and Lys286 each bind ATP. Asp259 provides a ligand contact to L-methionine. Lys290 lines the L-methionine pocket.

Belongs to the AdoMet synthase family. As to quaternary structure, homotetramer; dimer of dimers. It depends on Mg(2+) as a cofactor. K(+) serves as cofactor.

Its subcellular location is the cytoplasm. The enzyme catalyses L-methionine + ATP + H2O = S-adenosyl-L-methionine + phosphate + diphosphate. It functions in the pathway amino-acid biosynthesis; S-adenosyl-L-methionine biosynthesis; S-adenosyl-L-methionine from L-methionine: step 1/1. Its function is as follows. Catalyzes the formation of S-adenosylmethionine (AdoMet) from methionine and ATP. The overall synthetic reaction is composed of two sequential steps, AdoMet formation and the subsequent tripolyphosphate hydrolysis which occurs prior to release of AdoMet from the enzyme. The protein is S-adenosylmethionine synthase of Corynebacterium aurimucosum (strain ATCC 700975 / DSM 44827 / CIP 107346 / CN-1) (Corynebacterium nigricans).